The sequence spans 182 residues: Protein canopy homolog 2 (182 aa).

The first 20 residues, 1–20, serve as a signal peptide directing secretion; that stretch reads MKGWGWLALLLGALLGTAWA. In terms of domain architecture, Saposin B-type spans 24–175; that stretch reads QDLHCGACRA…KRTDLCDHAL (152 aa). Intrachain disulfides connect Cys-28-Cys-171, Cys-31-Cys-164, and Cys-86-Cys-137. At Ser-115 the chain carries Phosphoserine. The Prevents secretion from ER motif lies at 179–182; sequence HDEL.

Belongs to the canopy family. As to quaternary structure, interacts with MYLIP/MIR. In terms of tissue distribution, expressed in different tissues. Highest levels are detected in adult placenta, liver and pancreas.

It localises to the endoplasmic reticulum. Its function is as follows. Positive regulator of neurite outgrowth by stabilizing myosin regulatory light chain (MRLC). It prevents MIR-mediated MRLC ubiquitination and its subsequent proteasomal degradation. The chain is Protein canopy homolog 2 (CNPY2) from Homo sapiens (Human).